We begin with the raw amino-acid sequence, 626 residues long: Mini-chromosome maintenance complex-binding protein (626 aa).

Disordered regions lie at residues 152–216 and 265–287; these read STSY…LDLN and PSSL…AHDP. Residues 177–196 are compositionally biased toward basic and acidic residues; the sequence is KQREPHTEPHGNGDSKRQET. Positions 197–210 are enriched in polar residues; sequence EAPSSQTTAPSDCS.

This sequence belongs to the MCMBP family. As to quaternary structure, interacts with the mcm complex: associates with the mcm3-7 complex which lacks mcm2, while it does not interact with the mcm complex when mcm2 is present (mcm2-7 complex).

It localises to the nucleus. Functionally, associated component of the mcm complex that acts as a regulator of DNA replication. Binds to the MCM complex during late S phase and promotes the disassembly of the mcm complex from chromatin, thereby acting as a key regulator of pre-replication complex (pre-RC) unloading from replicated DNA. Can dissociate the mcm complex without addition of ATP; probably acts by destabilizing interactions of each individual subunits of the mcm complex. Required for sister chromatid cohesion. The polypeptide is Mini-chromosome maintenance complex-binding protein (mcmbp) (Salmo salar (Atlantic salmon)).